The chain runs to 262 residues: Phosphatidylglycerol--prolipoprotein diacylglyceryl transferase (262 aa).

Helical transmembrane passes span 9–29 (LGPL…ILAV), 41–61 (IIPD…ILGA), 80–100 (IFAI…GALV), and 109–129 (LINT…AQSL). Arg-131 contributes to the a 1,2-diacyl-sn-glycero-3-phospho-(1'-sn-glycerol) binding site. 3 helical membrane-spanning segments follow: residues 167-187 (QPTF…ILIF), 197-217 (GHIT…IEGM), and 226-246 (GLRV…MIVI).

It belongs to the Lgt family.

The protein localises to the cell membrane. It catalyses the reaction L-cysteinyl-[prolipoprotein] + a 1,2-diacyl-sn-glycero-3-phospho-(1'-sn-glycerol) = an S-1,2-diacyl-sn-glyceryl-L-cysteinyl-[prolipoprotein] + sn-glycerol 1-phosphate + H(+). It participates in protein modification; lipoprotein biosynthesis (diacylglyceryl transfer). Catalyzes the transfer of the diacylglyceryl group from phosphatidylglycerol to the sulfhydryl group of the N-terminal cysteine of a prolipoprotein, the first step in the formation of mature lipoproteins. This Streptococcus pneumoniae (strain Taiwan19F-14) protein is Phosphatidylglycerol--prolipoprotein diacylglyceryl transferase.